The primary structure comprises 312 residues: Short-chain dehydrogenase/reductase pkfC (312 aa).

Residues lysine 56, asparagine 108, and lysine 140 each coordinate NADP(+). Serine 164 serves as the catalytic Proton donor. NADP(+) contacts are provided by tyrosine 193 and lysine 197. The Proton acceptor role is filled by tyrosine 193. Lysine 197 serves as the catalytic Lowers pKa of active site Tyr.

Belongs to the short-chain dehydrogenases/reductases (SDR) family.

It functions in the pathway secondary metabolite biosynthesis. Its function is as follows. Short-chain dehydrogenase/reductase; part of the gene cluster that mediates the biosynthesis of aspernidine A, a prenylated isoindolinone. The starting point of the biosynthesis of aspernidin A is the production of orsellinaldehyde by the non-reducing polyketide synthase pkfA. Hydroxylation, methylation of one of the phenol groups, and prenylation, presumably catalyzed by the prenyltransferase pkfE, would be needed to yield aspernidine D. Subsequently, the cytochrome P450 monooxygenase pkfB is responsible for hydroxylation of aspernidine D to yield aspernidine E. The dehydrogenase pkfF may be responsible for further oxidation of aspernidine E to form a dialdehyde intermediate which is further transformed in a series of steps, some of which are enzyme-mediated, to generate aspernidine A. The possibility that additional enzymes outside of the cluster are involved in aspernidine A biosynthesis cannot be excluded. In Emericella nidulans (strain FGSC A4 / ATCC 38163 / CBS 112.46 / NRRL 194 / M139) (Aspergillus nidulans), this protein is Short-chain dehydrogenase/reductase pkfC.